The primary structure comprises 341 residues: Methionine import ATP-binding protein MetN 2 (341 aa).

Positions 2-241 (IQFKNISKHY…PQHPTTKTFI (240 aa)) constitute an ABC transporter domain. Residue 38-45 (GYSGAGKS) coordinates ATP.

The protein belongs to the ABC transporter superfamily. Methionine importer (TC 3.A.1.24) family. As to quaternary structure, the complex is composed of two ATP-binding proteins (MetN), two transmembrane proteins (MetI) and a solute-binding protein (MetQ).

Its subcellular location is the cell inner membrane. It carries out the reaction L-methionine(out) + ATP + H2O = L-methionine(in) + ADP + phosphate + H(+). The enzyme catalyses D-methionine(out) + ATP + H2O = D-methionine(in) + ADP + phosphate + H(+). Its function is as follows. Part of the ABC transporter complex MetNIQ involved in methionine import. Responsible for energy coupling to the transport system. This chain is Methionine import ATP-binding protein MetN 2, found in Acinetobacter baylyi (strain ATCC 33305 / BD413 / ADP1).